A 1179-amino-acid polypeptide reads, in one-letter code: Tubulin glycylase 3B (1179 aa).

Polar residues predominate over residues 177–199 (NKGQTNNSNRENGGNFHSEQSPK). 4 disordered regions span residues 177-208 (NKGQ…VVSG), 250-278 (QQPQ…LPLS), 592-625 (KVLS…AVQQ), and 853-890 (QKQH…LKQD). Residues 592–601 (KVLSNTKSKD) show a composition bias toward basic and acidic residues. Composition is skewed to polar residues over residues 614–625 (KSKSNNQNAVQQ) and 881–890 (AQSSTSLKQD). One can recognise a TTL domain in the interval 790–1152 (FIDFYETVDF…SMAKKGTKKN (363 aa)). Residues 965–968 (QKYI), K978, and D980 each bind ATP.

The protein resides in the cell projection. Its subcellular location is the cilium. It localises to the cytoplasm. The protein localises to the cytoskeleton. It is found in the cilium axoneme. Polyglycylase which modifies tubulin, generating side chains of glycine on the gamma-carboxyl groups of specific glutamate residues within the C-terminal tail of tubulin. Polyglycylates tubulin, with a preference for alpha-tubulin toward beta-tubulin. This is Tubulin glycylase 3B (TTLL3B) from Tetrahymena thermophila (strain SB210).